Reading from the N-terminus, the 694-residue chain is MTDGNLSTSMNGVALMGILDGRQGDSLQDLQHLSIKAAPRSLSVPEYGPSLKLGALEDRHSLQSVDSGIPTLEIGNPEPVPCSVVHVKRKQSESEIVPERAFQSACPLPSCTPSAPTCSEREQVVRKSSTFPRTGYDSVKLYSPTSKALSRSDNVSVCSVSSLGTELSTTLSVSNEDILDLMVTSNSSAIVTLENDDDPQFTDVTLSSINETSDLHQQDCVAETEEGRKLKLLHPFSHFFTRNLLARKQNARLDRQRDLGWKLFGKVPLRETAQKDSKKTQKEYEDKAGRPSRPPSPKQNVRKNLDFEPLSTTALILEDRPANLPAKPAEEAQKHRQQYEEMVLQAKKRELKEAQRRRKQLEERCKVEESIGNAVLTWNNEILPNWETMWCSKKVRDLWWQGIPPSVRGKVWSLAIGNELNITHELFDICLARAKERWRSLSTGGSEVENEDAGFSAADREASLELIKLDISRTFPNLCIFQQGGPYHDMLHSILGAYTCYRPDVGYVQGMSFIAAVLILNLDTADAFIAFSNLLNKPCQMAFFRVDHGLMLTYFAAFEVFFEENLPKLFAHFKKNNLTADIYLIDWIFTLYSKSLPLDLACRIWDVFCRDGEEFLFRTALGILKLFEDILTRMDFIHSAQFLTRLPEDLPADEVFAAISTVQMQSRNKKWAQVLSALQKDSREMEKGSPSLRH.

Residue Ser92 is modified to Phosphoserine. Positions 272 to 289 are enriched in basic and acidic residues; it reads TAQKDSKKTQKEYEDKAG. The tract at residues 272–305 is disordered; that stretch reads TAQKDSKKTQKEYEDKAGRPSRPPSPKQNVRKNL. Position 296 is a phosphoserine (Ser296). Residues 402 to 612 enclose the Rab-GAP TBC domain; that stretch reads GIPPSVRGKV…RIWDVFCRDG (211 aa).

Interacts with ULK1. May interact with RAB11A and RAB11B, but does not exhibit any GTPase-activating activity toward these proteins. Interacts with TRAPPC8.

It is found in the golgi apparatus. The protein localises to the cis-Golgi network. The protein resides in the trans-Golgi network. Functionally, plays a role in the regulation of starvation-induced autophagosome formation. Together with the TRAPPIII complex, regulates a constitutive trafficking step from peripheral recycling endosomes to the early Golgi, maintaining the cycling pool of ATG9 required for initiation of autophagy. This chain is TBC1 domain family member 14 (Tbc1d14), found in Mus musculus (Mouse).